The primary structure comprises 197 residues: Recombination protein RecR (197 aa).

The C4-type zinc-finger motif lies at 57–72; it reads CSTCFGITESDPCHLC. One can recognise a Toprim domain in the interval 79–174; it reads ASICVVEEPQ…KVTRLAHGIP (96 aa).

It belongs to the RecR family.

Its function is as follows. May play a role in DNA repair. It seems to be involved in an RecBC-independent recombinational process of DNA repair. It may act with RecF and RecO. The sequence is that of Recombination protein RecR from Geotalea uraniireducens (strain Rf4) (Geobacter uraniireducens).